The sequence spans 183 residues: Nucleoside triphosphate pyrophosphatase (183 aa).

The active-site Proton acceptor is the D71.

This sequence belongs to the Maf family. Requires a divalent metal cation as cofactor.

The protein localises to the cytoplasm. The enzyme catalyses a ribonucleoside 5'-triphosphate + H2O = a ribonucleoside 5'-phosphate + diphosphate + H(+). It catalyses the reaction a 2'-deoxyribonucleoside 5'-triphosphate + H2O = a 2'-deoxyribonucleoside 5'-phosphate + diphosphate + H(+). Nucleoside triphosphate pyrophosphatase. May have a dual role in cell division arrest and in preventing the incorporation of modified nucleotides into cellular nucleic acids. This Campylobacter jejuni subsp. doylei (strain ATCC BAA-1458 / RM4099 / 269.97) protein is Nucleoside triphosphate pyrophosphatase.